The following is a 669-amino-acid chain: DNA ligase (669 aa).

Residues 34 to 38 (DAEYD), 83 to 84 (SL), and Glu114 contribute to the NAD(+) site. Lys116 serves as the catalytic N6-AMP-lysine intermediate. Arg137, Glu171, Lys287, and Lys311 together coordinate NAD(+). Residues Cys405, Cys408, Cys423, and Cys428 each contribute to the Zn(2+) site. One can recognise a BRCT domain in the interval 591 to 669 (NIASYFAGKT…EERFLQELNK (79 aa)).

This sequence belongs to the NAD-dependent DNA ligase family. LigA subfamily. It depends on Mg(2+) as a cofactor. Mn(2+) is required as a cofactor.

It catalyses the reaction NAD(+) + (deoxyribonucleotide)n-3'-hydroxyl + 5'-phospho-(deoxyribonucleotide)m = (deoxyribonucleotide)n+m + AMP + beta-nicotinamide D-nucleotide.. DNA ligase that catalyzes the formation of phosphodiester linkages between 5'-phosphoryl and 3'-hydroxyl groups in double-stranded DNA using NAD as a coenzyme and as the energy source for the reaction. It is essential for DNA replication and repair of damaged DNA. This chain is DNA ligase, found in Bacillus cytotoxicus (strain DSM 22905 / CIP 110041 / 391-98 / NVH 391-98).